The sequence spans 533 residues: Protein disulfide isomerase-like 1-5 (533 aa).

An N-terminal signal peptide occupies residues 1–22; that stretch reads MRARRVVAAAAVLLLFAVVAVA. 2 Thioredoxin domains span residues 51–196 and 387–516; these read LGGG…KDQT and LLEG…EKLQ. Catalysis depends on Cys97, which acts as the Nucleophile. N-linked (GlcNAc...) asparagine glycosylation occurs at Asn151. Active-site nucleophile residues include Cys436 and Cys439. An intrachain disulfide couples Cys436 to Cys439. The Prevents secretion from ER signature appears at 530–533; that stretch reads KDEL.

This sequence belongs to the protein disulfide isomerase family.

Its subcellular location is the endoplasmic reticulum lumen. It carries out the reaction Catalyzes the rearrangement of -S-S- bonds in proteins.. Acts as a protein-folding catalyst that interacts with nascent polypeptides to catalyze the formation, isomerization, and reduction or oxidation of disulfide bonds. May play a role in storage protein biogenesis. The chain is Protein disulfide isomerase-like 1-5 (PDIL1-5) from Oryza sativa subsp. japonica (Rice).